A 1036-amino-acid chain; its full sequence is Nitrogen catabolic enzyme regulatory protein (1036 aa).

Positions 1–17 (MAASTTTPTATTRPFFT) are enriched in low complexity. Disordered regions lie at residues 1 to 126 (MAAS…HTQS), 207 to 240 (TDRT…SQGS), 256 to 298 (TPAG…QSQH), 318 to 351 (GYLP…HVSA), 590 to 743 (SSQG…PTTC), 792 to 976 (RGSG…PTTQ), and 1000 to 1028 (GMPN…TGAE). The segment covering 23-34 (TEHDFRFPRRPG) has biased composition (basic and acidic residues). Positions 45–56 (AAMSSSSANNNH) are enriched in low complexity. 3 tandem repeats follow at residues 49–55 (SSSANNN), 87–92 (SSSNNN), and 105–110 (SSSNNN). A 3 X approximate repeats region spans residues 49 to 110 (SSSANNNHNQ…INHQSSSNNN (62 aa)). Residues 100–114 (NINHQSSSNNNISKN) show a composition bias toward low complexity. A compositionally biased stretch (polar residues) spans 652 to 661 (PRSQSQSFRQ). Positions 703-714 (SSGLSSVPASRP) are enriched in low complexity. Over residues 723–736 (QGSTTNLQGAAGNS) the composition is skewed to polar residues. The segment at 743-767 (CTNCFTQTTPLWRRNPDGQPLCNAC) adopts a GATA-type zinc-finger fold. Over residues 802–827 (GTSTRSKKNASMSAAARKNSTLSITS) the composition is skewed to polar residues. 2 stretches are compositionally biased toward low complexity: residues 828 to 861 (NANN…ASGP) and 868 to 899 (AGST…SAPP). Residues 927-961 (SAGSDQPVSAGAVSSSGMDVDSPANSTGSNETMPT) show a composition bias toward polar residues. Positions 1000–1023 (GMPNGQAGQMMGASSSSGPGSGPS) are enriched in low complexity.

Interacts with nmr.

Its subcellular location is the nucleus. In terms of biological role, major nitrogen regulatory protein. During conditions of nitrogen limitation it turns on the expression of genes for enzymes which are required for the use of a variety of secondary nitrogen sources, including nitrates, purines, amino acids, and proteins. The polypeptide is Nitrogen catabolic enzyme regulatory protein (nit-2) (Neurospora crassa (strain ATCC 24698 / 74-OR23-1A / CBS 708.71 / DSM 1257 / FGSC 987)).